The following is a 522-amino-acid chain: Response regulator mcs4 (522 aa).

Residues 148 to 274 (DSLESPVSAP…RSISHSSLYT (127 aa)) are disordered. The segment covering 174–194 (NLRNASRTRSHQTLPSSNVNK) has biased composition (polar residues). Over residues 244-255 (RSDESTAEKLAK) the composition is skewed to basic and acidic residues. Residues 260–274 (TPTNSRSISHSSLYT) show a composition bias toward polar residues. The Response regulatory domain maps to 363–505 (NVLIVEDNII…WLEKKITEWG (143 aa)). Asp-412 bears the 4-aspartylphosphate mark.

Its subcellular location is the cytoplasm. In terms of biological role, response regulator that coordinately controls the stress activated wak1-wis1-sty1 MAP kinase pathway and fission yeast cell cycle. In Schizosaccharomyces pombe (strain 972 / ATCC 24843) (Fission yeast), this protein is Response regulator mcs4 (mcs4).